A 1024-amino-acid chain; its full sequence is Multidrug resistance protein MdtC (1024 aa).

Transmembrane regions (helical) follow at residues 12–32 (VATT…FSLL), 333–353 (EVER…FIFL), 360–380 (LIPA…MYLC), 387–407 (LSLM…IVVL), 435–455 (VLSM…MAGL), 469–489 (VAIG…CAWL), 528–548 (WVMV…ISIP), 853–873 (LWLI…LYES), 875–895 (VHPL…LLAL), 897–917 (LFDA…IGIV), 953–973 (PIIM…LSSG), and 984–1004 (ITIV…TPVI).

This sequence belongs to the resistance-nodulation-cell division (RND) (TC 2.A.6) family. MdtC subfamily. As to quaternary structure, part of a tripartite efflux system composed of MdtA, MdtB and MdtC. MdtC forms a heteromultimer with MdtB.

It is found in the cell inner membrane. The sequence is that of Multidrug resistance protein MdtC from Yersinia pseudotuberculosis serotype IB (strain PB1/+).